The primary structure comprises 436 residues: 3-phosphoshikimate 1-carboxyvinyltransferase (436 aa).

3-phosphoshikimate contacts are provided by Lys22, Ser23, and Arg27. Lys22 contributes to the phosphoenolpyruvate binding site. The phosphoenolpyruvate site is built by Gly95 and Arg123. 6 residues coordinate 3-phosphoshikimate: Ser170, Ser171, Gln172, Ser201, Asp322, and Lys349. Gln172 serves as a coordination point for phosphoenolpyruvate. Asp322 acts as the Proton acceptor in catalysis. Phosphoenolpyruvate-binding residues include Arg353, Arg397, and Lys422.

The protein belongs to the EPSP synthase family. Monomer.

Its subcellular location is the cytoplasm. It carries out the reaction 3-phosphoshikimate + phosphoenolpyruvate = 5-O-(1-carboxyvinyl)-3-phosphoshikimate + phosphate. The protein operates within metabolic intermediate biosynthesis; chorismate biosynthesis; chorismate from D-erythrose 4-phosphate and phosphoenolpyruvate: step 6/7. Catalyzes the transfer of the enolpyruvyl moiety of phosphoenolpyruvate (PEP) to the 5-hydroxyl of shikimate-3-phosphate (S3P) to produce enolpyruvyl shikimate-3-phosphate and inorganic phosphate. The protein is 3-phosphoshikimate 1-carboxyvinyltransferase of Ralstonia nicotianae (strain ATCC BAA-1114 / GMI1000) (Ralstonia solanacearum).